The sequence spans 976 residues: Poly(ADP-ribose) glycohydrolase (976 aa).

Residue Met-1 is modified to N-acetylmethionine. The tract at residues 1–69 (MNAGPGCEPC…GRAGQHRGSA (69 aa)) is disordered. The tract at residues 1–456 (MNAGPGCEPC…LSPDKKWLGT (456 aa)) is A-domain. The Nuclear localization signal signature appears at 10–16 (CTKRPRW). Phosphoserine is present on Ser-22. The span at 37-46 (RVLDPKDAHV) shows a compositional bias: basic and acidic residues. Ser-68 bears the Phosphoserine mark. Residues 76-83 (QKTITSWM) carry the PIP-box (PCNA interacting peptide) motif. Phosphoserine is present on residues Ser-133 and Ser-137. Thr-139 is subject to Phosphothreonine. A disordered region spans residues 183–350 (SNANIDRSPQ…PSRFQARDAD (168 aa)). Composition is skewed to basic and acidic residues over residues 191 to 206 (PQNDDHSDTDSEENRD) and 222 to 233 (TTEDEQAREAKS). Ser-197 is subject to Phosphoserine. Thr-199 is modified (phosphothreonine). Phosphoserine is present on residues Ser-261, Ser-264, Ser-286, Ser-291, Ser-298, Ser-302, and Ser-316. Over residues 316–331 (SEADEETSPGFDEQED) the composition is skewed to acidic residues. The span at 332 to 342 (GSSSQTANKPS) shows a compositional bias: polar residues. Residue Lys-340 is modified to N6-acetyllysine. Ser-448 bears the Phosphoserine mark. Positions 610–795 (QPIPLLKQKM…TEQYSEYTGY (186 aa)) are catalytic. 726 to 727 (IE) serves as a coordination point for substrate. Residue Asp-737 is part of the active site. Substrate-binding residues include Asn-740 and Gln-754. Catalysis depends on residues Glu-755 and Glu-756. Substrate contacts are provided by residues Tyr-795 and 869–874 (NWGCGA).

Belongs to the poly(ADP-ribose) glycohydrolase family. As to quaternary structure, interacts with PCNA. Interacts with NUDT5. As to expression, ubiquitously expressed.

The protein resides in the nucleus. Its subcellular location is the cytoplasm. It is found in the mitochondrion. It localises to the mitochondrion matrix. The enzyme catalyses [(1''-&gt;2')-ADP-alpha-D-ribose](n) + H2O = [(1''-&gt;2')-ADP-alpha-D-ribose](n-1) + ADP-D-ribose. Poly(ADP-ribose) glycohydrolase that degrades poly(ADP-ribose) by hydrolyzing the ribose-ribose bonds present in poly(ADP-ribose). PARG acts both as an endo- and exoglycosidase, releasing poly(ADP-ribose) of different length as well as ADP-ribose monomers. It is however unable to cleave the ester bond between the terminal ADP-ribose and ADP-ribosylated residues, leaving proteins that are mono-ADP-ribosylated. Poly(ADP-ribose) is synthesized after DNA damage is only present transiently and is rapidly degraded by PARG. Required to prevent detrimental accumulation of poly(ADP-ribose) upon prolonged replicative stress, while it is not required for recovery from transient replicative stress. Responsible for the prevalence of mono-ADP-ribosylated proteins in cells, thanks to its ability to degrade poly(ADP-ribose) without cleaving the terminal protein-ribose bond. Required for retinoid acid-dependent gene transactivation, probably by removing poly(ADP-ribose) from histone demethylase KDM4D, allowing chromatin derepression at RAR-dependent gene promoters. Involved in the synthesis of ATP in the nucleus, together with PARP1, NMNAT1 and NUDT5. Nuclear ATP generation is required for extensive chromatin remodeling events that are energy-consuming. In Homo sapiens (Human), this protein is Poly(ADP-ribose) glycohydrolase.